A 176-amino-acid polypeptide reads, in one-letter code: MAKPLMFLPLLVMAGFVGAGYFAMQQNDPNAMPTALAGKEAPAVRLEPLGAEAPFTDADLRDGKIKLVNFWASWCAPCRVEHPNLIGLKQDGIEIMGVNWKDTPDQAQGFLAEMGSPYTRLGADPGNKMGLDWGVAGVPETFVVDGAGRILTRIAGPLTEDVITKKIDPLLAGTAD.

The signal sequence occupies residues 1–19; it reads MAKPLMFLPLLVMAGFVGA. Residues 35–172 enclose the Thioredoxin domain; sequence ALAGKEAPAV…ITKKIDPLLA (138 aa). A disulfide bridge connects residues Cys75 and Cys78.

The protein belongs to the thioredoxin family. DsbE subfamily.

The protein localises to the periplasm. Required for disulfide bond formation in some periplasmic proteins. Also acts as a disulfide oxidoreductase in cytochromes c biogenesis. The cysteines of apocytochromes c must be in the reduced state for covalent linkage between the two moieties to occur. This is Thiol:disulfide interchange protein HelX (helX) from Rhodobacter capsulatus (strain ATCC BAA-309 / NBRC 16581 / SB1003).